The sequence spans 274 residues: 3',5'-cyclic adenosine monophosphate phosphodiesterase CpdA (274 aa).

Fe cation contacts are provided by Asp-21, His-23, Asp-63, Asn-93, His-163, His-202, and His-204. AMP is bound by residues His-23, Asp-63, and 93–94; that span reads NH. His-204 lines the AMP pocket.

Belongs to the cyclic nucleotide phosphodiesterase class-III family. Fe(2+) is required as a cofactor.

The enzyme catalyses 3',5'-cyclic AMP + H2O = AMP + H(+). Functionally, hydrolyzes cAMP to 5'-AMP. Plays an important regulatory role in modulating the intracellular concentration of cAMP, thereby influencing cAMP-dependent processes. The polypeptide is 3',5'-cyclic adenosine monophosphate phosphodiesterase CpdA (Vibrio vulnificus (strain CMCP6)).